We begin with the raw amino-acid sequence, 154 residues long: Cold shock domain-containing protein C2 (154 aa).

Disordered stretches follow at residues 1-22 and 36-62; these read MTSE…SPVW and ERGG…SATA. The residue at position 19 (Ser-19) is a Phosphoserine. The 68-residue stretch at 69–136 folds into the CSD domain; that stretch reads VFKGVCKQFS…KFQAVEVVLT (68 aa).

In terms of tissue distribution, brain-specific. Expression restricted to the pyramidal neurons of the cerebral cortex and in the Purkinje cells of the cerebellum.

The protein localises to the nucleus. It is found in the cytoplasm. Functionally, RNA-binding factor which binds specifically to the very 3'-UTR ends of both histone H1 and H3.3 mRNAs, encompassing the polyadenylation signal. Might play a central role in the negative regulation of histone variant synthesis in the developing brain. This chain is Cold shock domain-containing protein C2 (Csdc2), found in Rattus norvegicus (Rat).